A 497-amino-acid chain; its full sequence is Probable pectinesterase 30 (497 aa).

A signal peptide spans 1–21; that stretch reads MLVKVFSFFILMIIMVIGVSK. N-linked (GlcNAc...) asparagine glycans are attached at residues Asn-238 and Asn-254. A substrate-binding site is contributed by Thr-263. Asp-316 acts as the Proton donor in catalysis. The cysteines at positions 330 and 350 are disulfide-linked. Asp-337 serves as the catalytic Nucleophile. Asn-385 is a glycosylation site (N-linked (GlcNAc...) asparagine). 2 residues coordinate substrate: Arg-403 and Trp-405.

It belongs to the pectinesterase family. In terms of tissue distribution, expressed in siliques.

It localises to the secreted. The protein localises to the cell wall. The catalysed reaction is [(1-&gt;4)-alpha-D-galacturonosyl methyl ester](n) + n H2O = [(1-&gt;4)-alpha-D-galacturonosyl](n) + n methanol + n H(+). Its pathway is glycan metabolism; pectin degradation; 2-dehydro-3-deoxy-D-gluconate from pectin: step 1/5. Its function is as follows. Acts in the modification of cell walls via demethylesterification of cell wall pectin. This is Probable pectinesterase 30 (PME30) from Arabidopsis thaliana (Mouse-ear cress).